Here is a 622-residue protein sequence, read N- to C-terminus: Threonine--tRNA ligase (622 aa).

The interval 1-134 is editing domain; that stretch reads MKTLLIHSDY…GHPLSELSRK (134 aa). The catalytic stretch occupies residues 199–498; sequence PHVKYIKEKE…TLEDKPPALP (300 aa). Zn(2+) is bound by residues Cys-291, His-343, and His-467.

It belongs to the class-II aminoacyl-tRNA synthetase family. Homodimer. Requires Zn(2+) as cofactor.

It localises to the cytoplasm. The enzyme catalyses tRNA(Thr) + L-threonine + ATP = L-threonyl-tRNA(Thr) + AMP + diphosphate + H(+). Functionally, catalyzes the attachment of threonine to tRNA(Thr) in a two-step reaction: L-threonine is first activated by ATP to form Thr-AMP and then transferred to the acceptor end of tRNA(Thr). Also edits incorrectly charged L-seryl-tRNA(Thr). The protein is Threonine--tRNA ligase of Methanococcus vannielii (strain ATCC 35089 / DSM 1224 / JCM 13029 / OCM 148 / SB).